The sequence spans 532 residues: MTHAPISPVVLVILDGWGYRPQRSDNAIAMAKTPIMDSLWEVYPHTLIRTSAKDVGLPEGQMGNSEVGHLNIGAGRVVPQELVRISDAIEDGSIQQNQALLKLCAEIRPKKSKLHLIGLCSEGGVHSHLDHLLGLLDLAKVQGISDVCIHVITDGRDTNVTDGMPAIKRIQEHINKIKLGRMVTLSGRYYAMDRDRRWDRVEKAYNVMTSDQGIDGRSITEVLQAFYDQNITDEFIPPTRIAPGAIEAGDGVIFYNFRPDRARQLCYALTMPDFEDFDRDLISPLSFVTFTQYDPKLPVDVAFAPQNLNNILGQVIAQQGLKQFRCAETEKYPHVTYFFNGGLEKPFEGEVRELIPSPKVATYDQAPAMSAAAVTTSVCGAIEQGIYSLVVVNYANPDMVGHTGILDAAMKAVETVDLCLAKLLSSVNKLGGTVLITADHGNAETMVDESGNPWTAHTTNPVPLILIEGEGRKIPGHGGDVQLRDDGRLADIAPTILEILSIPVPVEMTGRSLIKPAEVEIKASRTPVRISL.

Mn(2+) contacts are provided by Asp-15 and Ser-65. Ser-65 serves as the catalytic Phosphoserine intermediate. Substrate is bound by residues His-126, 156-157, Arg-188, Arg-194, 258-261, and Lys-331; these read RD and RPDR. 5 residues coordinate Mn(2+): Asp-398, His-402, Asp-439, His-440, and His-457.

It belongs to the BPG-independent phosphoglycerate mutase family. Monomer. Mn(2+) serves as cofactor.

The catalysed reaction is (2R)-2-phosphoglycerate = (2R)-3-phosphoglycerate. It participates in carbohydrate degradation; glycolysis; pyruvate from D-glyceraldehyde 3-phosphate: step 3/5. In terms of biological role, catalyzes the interconversion of 2-phosphoglycerate and 3-phosphoglycerate. This chain is 2,3-bisphosphoglycerate-independent phosphoglycerate mutase, found in Microcystis aeruginosa (strain NIES-843 / IAM M-2473).